The primary structure comprises 216 residues: Type-4 uracil-DNA glycosylase (216 aa).

Cysteine 14 and cysteine 17 together coordinate [4Fe-4S] cluster. Uracil contacts are provided by residues 41–43 (GEA), phenylalanine 55, and asparagine 82. [4Fe-4S] cluster is bound by residues cysteine 86 and cysteine 102. Histidine 164 is a uracil binding site.

The protein belongs to the uracil-DNA glycosylase (UDG) superfamily. Type 4 (UDGa) family. In terms of assembly, interacts with the sliding clamp PCNA3 subunit.

It carries out the reaction Hydrolyzes single-stranded DNA or mismatched double-stranded DNA and polynucleotides, releasing free uracil.. Its function is as follows. Removes uracil bases that are present in DNA as a result of either deamination of cytosine or misincorporation of dUMP instead of dTMP. Can remove uracil from double-stranded DNA containing either a U/G or U/A base pair as well as from single-stranded DNA. This chain is Type-4 uracil-DNA glycosylase, found in Saccharolobus solfataricus (strain ATCC 35092 / DSM 1617 / JCM 11322 / P2) (Sulfolobus solfataricus).